An 820-amino-acid polypeptide reads, in one-letter code: Trimethylamine-N-oxide reductase (820 aa).

A signal peptide (tat-type signal) is located at residues methionine 1–alanine 33. Residue serine 179 participates in Mo-bis(molybdopterin guanine dinucleotide) binding.

This sequence belongs to the prokaryotic molybdopterin-containing oxidoreductase family. Mo-bis(molybdopterin guanine dinucleotide) is required as a cofactor. Post-translationally, predicted to be exported by the Tat system. The position of the signal peptide cleavage has not been experimentally proven.

It is found in the periplasm. It carries out the reaction trimethylamine + 2 Fe(III)-[cytochrome c] + H2O = trimethylamine N-oxide + 2 Fe(II)-[cytochrome c] + 3 H(+). Functionally, reduces trimethylamine-N-oxide (TMAO) into trimethylamine; an anaerobic reaction coupled to energy-yielding reactions. In Vibrio cholerae serotype O1 (strain ATCC 39315 / El Tor Inaba N16961), this protein is Trimethylamine-N-oxide reductase (torA).